Here is a 100-residue protein sequence, read N- to C-terminus: Large ribosomal subunit protein uL23 (100 aa).

It belongs to the universal ribosomal protein uL23 family. As to quaternary structure, part of the 50S ribosomal subunit. Contacts protein L29, and trigger factor when it is bound to the ribosome.

Functionally, one of the early assembly proteins it binds 23S rRNA. One of the proteins that surrounds the polypeptide exit tunnel on the outside of the ribosome. Forms the main docking site for trigger factor binding to the ribosome. The chain is Large ribosomal subunit protein uL23 from Shewanella pealeana (strain ATCC 700345 / ANG-SQ1).